Here is a 321-residue protein sequence, read N- to C-terminus: L-carnitine dehydrogenase (321 aa).

14–19 serves as a coordination point for NAD(+); that stretch reads GSGVIG.

This sequence belongs to the 3-hydroxyacyl-CoA dehydrogenase family. L-carnitine dehydrogenase subfamily. In terms of assembly, homodimer.

It is found in the cytoplasm. It carries out the reaction carnitine + NAD(+) = 3-dehydrocarnitine + NADH + H(+). It participates in amine and polyamine metabolism; carnitine metabolism. Its function is as follows. Catalyzes the NAD(+)-dependent oxidation of L-carnitine to 3-dehydrocarnitine. The chain is L-carnitine dehydrogenase from Pseudomonas putida (strain ATCC 47054 / DSM 6125 / CFBP 8728 / NCIMB 11950 / KT2440).